Consider the following 346-residue polypeptide: Protein Rae1 (346 aa).

4 WD repeats span residues 17-61, 64-105, 126-148, and 255-289; these read ASPP…ATVP, MKTM…VMQV, LMTGSWDKTLKFWDTRSPNPMMT, and VNDIAFHPVHGTLVTVGSDGTFSFWDKDARTKLKS.

The protein belongs to the WD repeat rae1 family. Interacts with hiw; the interaction with Rae1 may protect hiw from autophagy-mediated degradation. Interacts with Nup98-96. In terms of tissue distribution, head (at protein level).

Its subcellular location is the cytoplasm. The protein resides in the perinuclear region. It localises to the nucleus. It is found in the nucleus envelope. The protein localises to the chromosome. Functionally, probable component of the nuclear pore complex (NPC) which regulates the nuclear export of specific mRNAs and promotes cell cycle progression during mitosis and male meiosis. Acts with Nup98-96 to promote the nuclear export of specific mRNAs such as Moe, however it does not appear to be required for general nuclear mRNA transport. Essential mitotic and male meiotic cell cycle regulator with roles in many aspects of the cell cycle including chromatin organization and condensation, spindle assembly, chromosome segregation, and maintaining nuclear structure. During male meiosis it is required for completion of meiosis I, as well as accurate cytokinesis of the secondary spermatocytes, and postmeiotic differentiation of spermatids. Acts as a downstream regulatory target of the Hippo/SWH (Sav/Wts/Hpo) signaling pathway to promote mitotic cell cycle progression and proliferation during wing and eye development, and thereby plays a key role in integrating the regulation of proliferation with organ size control. When the Hippo/SWH signaling pathway is inactive, Rae1 acts independently of yki to increase organ size by promoting mitotic S-phase entry and increase cellular proliferation. When the Hippo/SWH signaling pathway is active it inhibits the activity of Rae1 in a Wts-dependent manner to restrict organ growth. However, Rae1 is also able to negatively regulate the levels and activity of yki likely by activating the core kinases of the Hippo/SWH signaling pathway hpo and Wts and increasing the protein levels of hpo, Mer and Wts; it is therefore likely that it functions as part of a negative feedback loop with the Hippo/SWH signaling pathway to regulate pathway homeostasis and prevent organ overgrowth. Promotes mitotic cell cycle progression, at least in part, by increasing the accumulation of mitotic cyclins such as CycB, possibly by directly up-regulating cyclin transcripts or by inhibiting the anaphase promoting complex/cyclosome (APC/C) activator fzy. Also required in presynaptic, postmitotic motor neurons to restrain synaptic terminal growth. Promotes the expression and stability of the an E3 ubiquitin ligase of hiw, and is likely to function in the regulation of synaptic growth by binding to hiw and protecting it from autophagy-mediated degradation. The protein is Protein Rae1 of Drosophila melanogaster (Fruit fly).